A 438-amino-acid chain; its full sequence is tRNA-dihydrouridine(16/17) synthase [NAD(P)(+)]-like (438 aa).

Residues 23 to 25 (PMV) and Gln-79 contribute to the FMN site. The Proton donor role is filled by Cys-108. FMN-binding positions include Lys-147, His-175, 208–210 (NGN), and 232–233 (AE). Residues 343-387 (GPKEGSKENSSGRSKRALEEEEGSMEGLSKNKLKKQLRNPHKTFD) form a disordered region. Residues 373-383 (NKLKKQLRNPH) show a composition bias toward basic residues.

It belongs to the Dus family. Dus1 subfamily. It depends on FMN as a cofactor.

It localises to the cytoplasm. It is found in the nucleus. The catalysed reaction is 5,6-dihydrouridine(16) in tRNA + NADP(+) = uridine(16) in tRNA + NADPH + H(+). It carries out the reaction 5,6-dihydrouridine(16) in tRNA + NAD(+) = uridine(16) in tRNA + NADH + H(+). The enzyme catalyses 5,6-dihydrouridine(17) in tRNA + NAD(+) = uridine(17) in tRNA + NADH + H(+). It catalyses the reaction 5,6-dihydrouridine(17) in tRNA + NADP(+) = uridine(17) in tRNA + NADPH + H(+). Catalyzes the synthesis of dihydrouridine, a modified base found in the D-loop of most tRNAs. Specifically modifies U16 and U17 in cytoplasmic tRNAs. Affects the level of some mature tRNA and thereby the total cellular translation. This chain is tRNA-dihydrouridine(16/17) synthase [NAD(P)(+)]-like (Dus1l), found in Rattus norvegicus (Rat).